The chain runs to 171 residues: bZIP transcription factor 2 (171 aa).

A compositionally biased stretch (low complexity) spans 1–24; it reads MASSSSTYRSSSSSDGGNNNPSDS. The disordered stretch occupies residues 1-54; sequence MASSSSTYRSSSSSDGGNNNPSDSVVTVDERKRKRMLSNRESARRSRMRKQKHV. The 64-residue stretch at 29-92 folds into the bZIP domain; that stretch reads DERKRKRMLS…MKIQAENSVL (64 aa). A basic motif region spans residues 31–52; the sequence is RKRKRMLSNRESARRSRMRKQK. A leucine-zipper region spans residues 57 to 71; that stretch reads LTAQINQLSNDNRQI.

Forms heterodimers with BZIP9, BZIP10, BZIP25 and BZIP63. Component of a ternary complex composed of BZIP2-BZIP63 heterodimer and KIN10.

The protein localises to the nucleus. Functionally, transcription factor that binds to specific DNA sequences in target gene promoters. BZIP2-BZIP63-KIN10 complex binds to the ETFQO promoter to up-regulate its transcription. In Arabidopsis thaliana (Mouse-ear cress), this protein is bZIP transcription factor 2.